The chain runs to 159 residues: Eukaryotic translation initiation factor 5A-2 (159 aa).

The span at 1-10 (MSDEEHHFEP) shows a compositional bias: basic and acidic residues. Residues 1–21 (MSDEEHHFEPAADAGASKTYP) form a disordered region. Lys-52 carries the hypusine modification.

Belongs to the eIF-5A family. In terms of processing, lys-52 undergoes hypusination, a unique post-translational modification that consists in the addition of a butylamino group from spermidine to lysine side chain, leading to the formation of the unusual amino acid hypusine. eIF-5As are the only known proteins to undergo this modification, which is essential for their function.

Its function is as follows. Translation factor that promotes translation elongation and termination, particularly upon ribosome stalling at specific amino acid sequence contexts. Binds between the exit (E) and peptidyl (P) site of the ribosome and promotes rescue of stalled ribosome: specifically required for efficient translation of polyproline-containing peptides as well as other motifs that stall the ribosome. Acts as a ribosome quality control (RQC) cofactor by joining the RQC complex to facilitate peptidyl transfer during CAT tailing step. The chain is Eukaryotic translation initiation factor 5A-2 from Medicago sativa (Alfalfa).